We begin with the raw amino-acid sequence, 359 residues long: Lactosylceramide 4-alpha-galactosyltransferase (359 aa).

The Cytoplasmic portion of the chain corresponds to M1–R30. Residues V31–W51 traverse the membrane as a helical; Signal-anchor for type II membrane protein segment. The Lumenal segment spans residues H52–L359. The DXD motif motif lies at D198–D200. Residues N209 and N315 are each glycosylated (N-linked (GlcNAc...) asparagine).

This sequence belongs to the glycosyltransferase 32 family.

It localises to the golgi apparatus membrane. It catalyses the reaction a beta-D-Gal-(1-&gt;4)-beta-D-Glc-(1&lt;-&gt;1)-Cer(d18:1(4E)) + UDP-alpha-D-galactose = a globoside Gb3Cer (d18:1(4E)) + UDP + H(+). It carries out the reaction a beta-D-Gal-(1&lt;-&gt;1')-ceramide + UDP-alpha-D-galactose = alpha-D-Gal-(1-&gt;4)-beta-D-Gal-(1&lt;-&gt;1')-Cer + UDP + H(+). Its pathway is glycolipid biosynthesis. Its function is as follows. Catalyzes the transfer of galactose from UDP-alpha-D-galactose to lactosylceramide/beta-D-galactosyl-(1-&gt;4)-beta-D-glucosyl-(1&lt;-&gt;1)-ceramide(d18:1(4E)) to produce globotriaosylceramide/globoside Gb3Cer (d18:1(4E)). Also able to transfer galactose to galactosylceramide/beta-D-Gal-(1&lt;-&gt;1')-Cer. Globoside Gb3Cer is a glycosphingolipid of the globo serie, one of the major types of neutral root structures of glycosphingolipids, that constitute a significant portion of mammalian cell membranes. The polypeptide is Lactosylceramide 4-alpha-galactosyltransferase (Mus musculus (Mouse)).